Consider the following 666-residue polypeptide: Probable potassium transport system protein Kup (666 aa).

12 consecutive transmembrane segments (helical) span residues 16–36, 58–78, 100–120, 141–161, 165–185, 221–241, 253–273, 292–312, 343–363, 373–393, 399–419, and 424–444; these read GFII…LYTM, ISLI…LIAL, PWLI…GALT, IYQN…VLFG, FGTG…FSFL, IFIL…YSDL, WPFV…WILA, LTVY…QALI, LYIP…VLYF, YGLA…YYLI, PFLA…FFWA, and FMHG…VMFI.

This sequence belongs to the HAK/KUP transporter (TC 2.A.72) family.

It localises to the cell membrane. The enzyme catalyses K(+)(in) + H(+)(in) = K(+)(out) + H(+)(out). Functionally, transport of potassium into the cell. Likely operates as a K(+):H(+) symporter. This chain is Probable potassium transport system protein Kup, found in Streptococcus pyogenes serotype M18 (strain MGAS8232).